The sequence spans 556 residues: MLRSAAITKGTQRSPNRAMLRAVGFGDEDFNKPIIGIANGYSTITPCNIGLNDLARRSEEAARQAGAMPQMFGTITVSDGISMGTEGMKYSLVSREVIADSIETACNAQSMDGVLAIGGCDKNMPGAMIALARMNIPGVFVYGGTIKPGKLADRDLTVVSAFEAVGQHASGKINEEQLTAIEKNACPGAGSCGGMFTANTMSAAIETLGLSLPYSSTMAAEDEEKANSAARSAEVLVDAIKANICPRDLLTKNAFENAISVVMAVGGSTNAVLHLLAIARSAGVDLCIDDFERIRQRVPVICDLKPSGRYVTVDLHNAGGIPQVMKQLLDAGLLHGDCRNVEGKTLRELLKDVPSEPSAEQDVIHPLSKPVYAKGHLAILKGNLASEGCVAKISGIKTPVLTGPARVFESEEACLAAILNNKVKAGDVVVIRNEGPVGGPGMREMLAPTSAIVGEDLGDKVALITDGRFSGGTYGLVVGHVAPEAAVGGMIGLVQEGDSITIDANQLLIQLNVEKDELERRSSAWEKTQPRYQTGVLGKYARMVSSASNGAVTDQP.

Position 47 (Cys-47) interacts with [2Fe-2S] cluster. Mg(2+) is bound at residue Asp-79. Cys-120 provides a ligand contact to [2Fe-2S] cluster. The Mg(2+) site is built by Asp-121 and Lys-122. Position 122 is an N6-carboxylysine (Lys-122). [2Fe-2S] cluster is bound at residue Cys-192. Glu-444 serves as a coordination point for Mg(2+). Catalysis depends on Ser-470, which acts as the Proton acceptor.

This sequence belongs to the IlvD/Edd family. Homodimer. The cofactor is [2Fe-2S] cluster. Mg(2+) serves as cofactor.

The catalysed reaction is (2R)-2,3-dihydroxy-3-methylbutanoate = 3-methyl-2-oxobutanoate + H2O. The enzyme catalyses (2R,3R)-2,3-dihydroxy-3-methylpentanoate = (S)-3-methyl-2-oxopentanoate + H2O. It functions in the pathway amino-acid biosynthesis; L-isoleucine biosynthesis; L-isoleucine from 2-oxobutanoate: step 3/4. It participates in amino-acid biosynthesis; L-valine biosynthesis; L-valine from pyruvate: step 3/4. Its function is as follows. Functions in the biosynthesis of branched-chain amino acids. Catalyzes the dehydration of (2R,3R)-2,3-dihydroxy-3-methylpentanoate (2,3-dihydroxy-3-methylvalerate) into 2-oxo-3-methylpentanoate (2-oxo-3-methylvalerate) and of (2R)-2,3-dihydroxy-3-methylbutanoate (2,3-dihydroxyisovalerate) into 2-oxo-3-methylbutanoate (2-oxoisovalerate), the penultimate precursor to L-isoleucine and L-valine, respectively. In Prochlorococcus marinus (strain MIT 9313), this protein is Dihydroxy-acid dehydratase.